The chain runs to 499 residues: Histidine ammonia-lyase (499 aa).

The 5-imidazolinone (Ala-Gly) cross-link spans 142-144; sequence ASG. 2,3-didehydroalanine (Ser) is present on Ser-143.

Belongs to the PAL/histidase family. In terms of processing, contains an active site 4-methylidene-imidazol-5-one (MIO), which is formed autocatalytically by cyclization and dehydration of residues Ala-Ser-Gly.

The protein resides in the cytoplasm. The enzyme catalyses L-histidine = trans-urocanate + NH4(+). Its pathway is amino-acid degradation; L-histidine degradation into L-glutamate; N-formimidoyl-L-glutamate from L-histidine: step 1/3. This is Histidine ammonia-lyase from Staphylococcus saprophyticus subsp. saprophyticus (strain ATCC 15305 / DSM 20229 / NCIMB 8711 / NCTC 7292 / S-41).